A 316-amino-acid polypeptide reads, in one-letter code: Transaldolase B (316 aa).

The active-site Schiff-base intermediate with substrate is lysine 131.

This sequence belongs to the transaldolase family. Type 1 subfamily. In terms of assembly, homodimer.

It is found in the cytoplasm. It carries out the reaction D-sedoheptulose 7-phosphate + D-glyceraldehyde 3-phosphate = D-erythrose 4-phosphate + beta-D-fructose 6-phosphate. The protein operates within carbohydrate degradation; pentose phosphate pathway; D-glyceraldehyde 3-phosphate and beta-D-fructose 6-phosphate from D-ribose 5-phosphate and D-xylulose 5-phosphate (non-oxidative stage): step 2/3. In terms of biological role, transaldolase is important for the balance of metabolites in the pentose-phosphate pathway. The polypeptide is Transaldolase B (talB) (Pasteurella multocida (strain Pm70)).